Consider the following 682-residue polypeptide: MSHYRRHSLEPSITSKFRDSLSFQRDDDVINKPDFRELDFGSPLRPRGSSSAAATPAASGSSSSSSGSASGKPAVTSQFARRSHSGELSGLSQTSPVKPGSVNRNLKPGHRRSASAGTPLIYSGLGFSPVNNNNNSSRGGGSGATSPNPGVLPTGNICPSGRILKTGMATRASVRPETLCTGTANYGHGNIIRTGGKVSHATKAAAEMSDSEEVKKAGNVMYRKGNYAEALALYDRAISLSPENPAYRSNRAAALAASGRLEEAVKECLEAVRCDPSYARAHQRLASLYLRLGEAENARRHLCVSGQCPDQADLQRLQTLEKHLRLCTEARKIGDWRTVISEIDAAIANGADSSPQLVACKAEAFLRLHQIKDSDLCISSIPRLDHHHTQPPEKLFGIVCDAYVLCVQAQVDMALGRFENAIVKVERAMTIDHSNSPEVVSVLNNVKNVAKARTRGNELFSSGRYSEASVAYGDGLKLDAFNSVLYCNRAACWFKLGMWEKSVDDCNQALRIQPSYTKALLRRAASYGKLGRWEDAVRDYEVLRKELPGDSEVAESLQRARNALSNKSEEPKYLGFNNEVEEVSTLDKFKTATSLPGISVFHFKSSSNRQSEAISPFVNTLCLRYPLVHFFKVDVEESLALAKAESIKKIPTFKIYKKGEKVKEMVCPSHQLLEDSVTHFLL.

2 disordered regions span residues 1–120 (MSHY…GTPL) and 132–157 (NNNNSSRGGGSGATSPNPGVLPTGNI). Position 8 is a phosphoserine (Ser-8). Over residues 16–39 (KFRDSLSFQRDDDVINKPDFRELD) the composition is skewed to basic and acidic residues. Ser-42 bears the Phosphoserine mark. A compositionally biased stretch (low complexity) spans 48–71 (GSSSAAATPAASGSSSSSSGSASG). TPR repeat units lie at residues 211-244 (SEEVKKAGNVMYRKGNYAEALALYDRAISLSPEN), 246-278 (AYRSNRAAALAASGRLEEAVKECLEAVRCDPSY), 280-312 (RAHQRLASLYLRLGEAENARRHLCVSGQCPDQA), 402-435 (AYVLCVQAQVDMALGRFENAIVKVERAMTIDHSN), 449-482 (VAKARTRGNELFSSGRYSEASVAYGDGLKLDAFN), 483-516 (SVLYCNRAACWFKLGMWEKSVDDCNQALRIQPSY), and 518-550 (KALLRRAASYGKLGRWEDAVRDYEVLRKELPGD). One can recognise a Thioredoxin domain in the interval 587–674 (DKFKTATSLP…MVCPSHQLLE (88 aa)).

As to expression, widely expressed.

Its function is as follows. Involved in osmotic and salt stress tolerance. May play a role in the control of meristematic cell size during osmotic stress. In Arabidopsis thaliana (Mouse-ear cress), this protein is TPR repeat-containing thioredoxin TTL4 (TTL4).